The following is a 100-amino-acid chain: Probable antitoxin MazE4 (100 aa).

Residues Pro-77–Gln-100 are disordered.

Forms a complex with cognate toxin MazF4.

Functionally, antitoxin component of a type II toxin-antitoxin (TA) system. Labile antitoxin that binds to cognate MazF4 toxin and counteracts its endoribonuclease activity. The chain is Probable antitoxin MazE4 (mazE4) from Mycobacterium tuberculosis (strain CDC 1551 / Oshkosh).